The primary structure comprises 185 residues: Ribosome-recycling factor (185 aa).

The protein belongs to the RRF family.

The protein resides in the cytoplasm. Responsible for the release of ribosomes from messenger RNA at the termination of protein biosynthesis. May increase the efficiency of translation by recycling ribosomes from one round of translation to another. This is Ribosome-recycling factor from Lactococcus lactis subsp. cremoris (strain SK11).